The primary structure comprises 3574 residues: Chromatin structure-remodeling complex protein SYD (3574 aa).

Disordered stretches follow at residues Ser76–Asn105, Thr123–Asp211, and Asp328–Ser372. 2 stretches are compositionally biased toward polar residues: residues Ser124 to Arg148 and Pro155 to His168. Residues Asn169–Ser181 show a composition bias toward basic and acidic residues. Residues Trp194–Phe204 are compositionally biased toward polar residues. Residues Arg358–Ser372 show a composition bias toward basic and acidic residues. Residues Gln573–Ile647 enclose the HSA domain. The region spanning Val766 to Asn933 is the Helicase ATP-binding domain. An ATP-binding site is contributed by Asp779–Thr786. The DEAH box signature appears at Asp884–His887. In terms of domain architecture, Helicase C-terminal spans Met1077–Thr1223. Residues Ala1266–Asp1273 carry the Nuclear localization signal motif. 19 disordered regions span residues Lys1342–Thr1472, His1500–Glu1575, Ile1588–His1637, Gly1690–Val1811, Gln1830–Asp1868, Ser2040–Asn2068, Ser2089–Val2115, Ser2143–Ile2162, Leu2179–Asp2220, Glu2235–Asp2338, Glu2350–Asp2451, Phe2517–Glu2538, Ser2684–Asp2703, Ile2718–Arg2759, Asp2865–Leu2884, Glu3017–Ser3045, Asn3189–Lys3208, Val3316–Met3337, and Thr3512–Val3574. The span at Ala1362–Lys1371 shows a compositional bias: basic and acidic residues. 2 stretches are compositionally biased toward polar residues: residues Ser1399 to Thr1426 and His1500 to Asp1511. Residues Gly1532–Gly1546 are compositionally biased toward basic residues. Polar residues-rich tracts occupy residues Gly1555–Ala1571 and Glu1597–Thr1614. A compositionally biased stretch (basic and acidic residues) spans Arg1617–Asp1627. Composition is skewed to polar residues over residues Gly1690–Ser1699, Lys1706–Glu1752, Asp1796–Thr1806, His1832–Gln1849, Ser2040–Ala2057, and Ser2090–Ser2110. The span at Asp2248–Val2260 shows a compositional bias: acidic residues. Positions Asp2438–Asp2451 are enriched in basic and acidic residues. Polar residues predominate over residues Ile2718–Gln2735. 2 stretches are compositionally biased toward polar residues: residues Lys3034–Ser3045 and Asp3191–Ser3204. Residues Lys3523–Gly3538 are compositionally biased toward basic and acidic residues.

This sequence belongs to the SNF2/RAD54 helicase family. As to quaternary structure, interacts with LFY. Binds to BARD1/ROW1. Post-translationally, phosphorylated. As to expression, mostly expressed in rapidly dividing cells in the vegetative, inflorescence, and root meristems, as well as in young leaf and flower primordia. Isoform 1 is predominantly found in seedlings whereas isoform 2 is present in both seedlings and inflorescences (at protein level).

The protein localises to the cytoplasm. It localises to the nucleus. Its function is as follows. Catalytic component of the chromatin structure-remodeling complex (RSC), which is involved in transcription regulation and nucleosome positioning. Controls stem cell fate via the transcription regulation of WUS in the shoot apical meristem, by modulating its promoter. LFY-dependent repressor of the meristem identity switch from vegetative to reproductive development probably by modulating chromatin state. Involved in the regulation of floral homeotic gene expression in response to environmental stimuli. Required for carpel and ovule development, and for cotyledon separation via the regulation of CUC2 transcription. Regulates the promoters of several genes downstream of the jasmonate (JA) and ethylene (ET) signaling pathways. Required for resistance against the necrotrophic pathogen B.cinerea but not the biotrophic pathogen P.syringae. This is Chromatin structure-remodeling complex protein SYD (SYD) from Arabidopsis thaliana (Mouse-ear cress).